Here is a 1027-residue protein sequence, read N- to C-terminus: Scavenger receptor cysteine-rich domain-containing protein SCART1 (1027 aa).

Residues 1 to 19 (MRAALWTLGLGPLLLNLWA) form the signal peptide. Residues 20–906 (VPIGGPGALR…APFRTFWVVS (887 aa)) lie on the Extracellular side of the membrane. Positions 28 to 128 (LRLAYRHSTC…HAWVVVALCS (101 aa)) constitute an SRCR 1 domain. Disulfide bonds link Cys-53-Cys-117, Cys-66-Cys-127, and Cys-97-Cys-107. N-linked (GlcNAc...) asparagine glycosylation is present at Asn-94. A glycan (N-linked (GlcNAc...) asparagine) is linked at Asn-129. SRCR domains follow at residues 135-227 (LRLV…VVCS), 232-326 (ARLV…LRCS), 328-428 (FRMV…AVCS), 434-534 (LRLR…VVCS), 555-656 (LSLH…VFCS), 661-761 (LRLR…AGLS), and 786-886 (LRVR…VRCW). Cystine bridges form between Cys-160/Cys-216, Cys-171/Cys-226, Cys-196/Cys-206, Cys-253/Cys-315, Cys-266/Cys-325, and Cys-297/Cys-307. Residue Asn-332 is glycosylated (N-linked (GlcNAc...) asparagine). Intrachain disulfides connect Cys-353–Cys-417, Cys-366–Cys-427, Cys-397–Cys-407, Cys-472–Cys-533, Cys-503–Cys-513, Cys-594–Cys-655, and Cys-625–Cys-635. 2 disulfides stabilise this stretch: Cys-824/Cys-885 and Cys-855/Cys-865. The chain crosses the membrane as a helical span at residues 907–927 (VVLGSLLGLLLLGLMAFLILP). Residues 928-1027 (RVTQAMQRGL…AAFPLEEMTL (100 aa)) are Cytoplasmic-facing.

Mainly expressed by CD4(+) and CD8(+) T lymphocytes. Also highly expressed in small intestine and colon. Expressed (at protein level) in small intestine, stomach, gall bladder, and placental villi.

It is found in the membrane. Functionally, may play a role in the immune system, perhaps as a co-receptor on alphabeta and gammadelta T-cells. The polypeptide is Scavenger receptor cysteine-rich domain-containing protein SCART1 (Homo sapiens (Human)).